Consider the following 586-residue polypeptide: Probable lysosomal cobalamin transporter (586 aa).

The next 9 membrane-spanning stretches (helical) occupy residues 10-30 (IWIA…VTTF), 47-67 (VVSL…IALV), 96-116 (IVYY…IPFA), 147-167 (SGFI…PAAG), 191-211 (ALTF…VLYT), 315-335 (LVGG…MLIT), 378-398 (IIMA…LATV), 420-440 (ILIA…SIAM), and 509-529 (VFGA…LIVL). Asn-540 carries N-linked (GlcNAc...) asparagine glycosylation.

The protein belongs to the LIMR family. LMBRD1 subfamily.

Its subcellular location is the lysosome membrane. Probable lysosomal cobalamin transporter. Required to export cobalamin from lysosomes allowing its conversion to cofactors. The sequence is that of Probable lysosomal cobalamin transporter from Pyricularia oryzae (strain 70-15 / ATCC MYA-4617 / FGSC 8958) (Rice blast fungus).